The primary structure comprises 424 residues: Glutamate-1-semialdehyde 2,1-aminomutase (424 aa).

K263 carries the post-translational modification N6-(pyridoxal phosphate)lysine.

Belongs to the class-III pyridoxal-phosphate-dependent aminotransferase family. HemL subfamily. As to quaternary structure, homodimer. It depends on pyridoxal 5'-phosphate as a cofactor.

It localises to the cytoplasm. The catalysed reaction is (S)-4-amino-5-oxopentanoate = 5-aminolevulinate. It functions in the pathway porphyrin-containing compound metabolism; protoporphyrin-IX biosynthesis; 5-aminolevulinate from L-glutamyl-tRNA(Glu): step 2/2. This chain is Glutamate-1-semialdehyde 2,1-aminomutase, found in Campylobacter jejuni subsp. jejuni serotype O:23/36 (strain 81-176).